The following is a 608-amino-acid chain: ATP-citrate synthase beta chain protein 1 (608 aa).

ATP contacts are provided by residues 214 to 234 and 265 to 291; these read ILRFNNIPQIKMVVVLGELGG and FKSEVQFGHAGAKSGGEMESAQAKNQA. Position 231 (Glu-231) interacts with Mg(2+). His-273 acts as the Tele-phosphohistidine intermediate in catalysis. 292–302 serves as a coordination point for CoA; the sequence is LQDAGATVPTS.

It belongs to the succinate/malate CoA ligase alpha subunit family. In terms of assembly, heterooctamer of 4 alpha and 4 beta chains.

It is found in the cytoplasm. Its subcellular location is the cytosol. The catalysed reaction is oxaloacetate + acetyl-CoA + ADP + phosphate = citrate + ATP + CoA. Functionally, ATP citrate-lyase is the primary enzyme responsible for the synthesis of cytosolic acetyl-CoA, used for the elongation of fatty acids and biosynthesis of isoprenoids, flavonoids and malonated derivatives. May supply substrate to the cytosolic acetyl-CoA carboxylase, which generates the malonyl-CoA used for the synthesis of a multitude of compounds, including very long chain fatty acids and flavonoids. Required for normal growth and development and elongation of C18 fatty acids to C20 to C24 fatty acids in seeds. In contrast to all known animal ACL enzymes having a homomeric structure, plant ACLs are composed of alpha and beta chains. The chain is ATP-citrate synthase beta chain protein 1 (ACLB-1) from Arabidopsis thaliana (Mouse-ear cress).